The primary structure comprises 98 residues: ESAT-6-like protein EsxW (98 aa).

Belongs to the WXG100 family. CFP-10 subfamily. Forms a tight 1:1 complex with EsxV. The complex is destabilized at low pH. Unfolding of the proteins is required for dissociation of the complex and membrane binding.

It localises to the secreted. This chain is ESAT-6-like protein EsxW, found in Mycobacterium tuberculosis (strain ATCC 25618 / H37Rv).